The primary structure comprises 553 residues: CTP synthase (553 aa).

The segment at 1-275 (MPTETEYDPS…DQYVMEQFDM (275 aa)) is amidoligase domain. Ser24 contacts CTP. Ser24 lines the UTP pocket. Residue 25 to 30 (GLGKGI) participates in ATP binding. Position 65 (Tyr65) interacts with L-glutamine. Asp82 contributes to the ATP binding site. Mg(2+) is bound by residues Asp82 and Glu150. CTP contacts are provided by residues 157 to 159 (DIE), 196 to 201 (KTKPTQ), and Lys232. UTP-binding positions include 196–201 (KTKPTQ) and Lys232. In terms of domain architecture, Glutamine amidotransferase type-1 spans 308 to 540 (KYALEDAYMS…LDAVLERADV (233 aa)). Gly362 provides a ligand contact to L-glutamine. Cys389 acts as the Nucleophile; for glutamine hydrolysis in catalysis. L-glutamine contacts are provided by residues 390 to 393 (LGFQ), Glu413, and Arg470. Catalysis depends on residues His513 and Glu515.

It belongs to the CTP synthase family. Homotetramer.

The enzyme catalyses UTP + L-glutamine + ATP + H2O = CTP + L-glutamate + ADP + phosphate + 2 H(+). It carries out the reaction L-glutamine + H2O = L-glutamate + NH4(+). It catalyses the reaction UTP + NH4(+) + ATP = CTP + ADP + phosphate + 2 H(+). The protein operates within pyrimidine metabolism; CTP biosynthesis via de novo pathway; CTP from UDP: step 2/2. Its activity is regulated as follows. Allosterically activated by GTP, when glutamine is the substrate; GTP has no effect on the reaction when ammonia is the substrate. The allosteric effector GTP functions by stabilizing the protein conformation that binds the tetrahedral intermediate(s) formed during glutamine hydrolysis. Inhibited by the product CTP, via allosteric rather than competitive inhibition. In terms of biological role, catalyzes the ATP-dependent amination of UTP to CTP with either L-glutamine or ammonia as the source of nitrogen. Regulates intracellular CTP levels through interactions with the four ribonucleotide triphosphates. The chain is CTP synthase from Halobacterium salinarum (strain ATCC 29341 / DSM 671 / R1).